The sequence spans 134 residues: Mediator of RNA polymerase II transcription subunit 10 (134 aa).

This sequence belongs to the Mediator complex subunit 10 family. Component of the Mediator complex.

It localises to the nucleus. Its function is as follows. Component of the Mediator complex, a coactivator involved in the regulated transcription of nearly all RNA polymerase II-dependent genes. Mediator functions as a bridge to convey information from gene-specific regulatory proteins to the basal RNA polymerase II transcription machinery. Mediator is recruited to promoters by direct interactions with regulatory proteins and serves as a scaffold for the assembly of a functional preinitiation complex with RNA polymerase II and the general transcription factors. Negatively regulates the Wnt signaling pathway and positively regulates the Nodal signaling pathway. Required for cardiac cushion formation. In Danio rerio (Zebrafish), this protein is Mediator of RNA polymerase II transcription subunit 10 (med10).